The following is a 184-amino-acid chain: Cbp/p300-interacting transactivator 4 (184 aa).

The segment covering 18 to 28 (PSAAAAHGPHA) has biased composition (low complexity). Disordered regions lie at residues 18–67 (PSAA…YGAF) and 94–128 (TPYP…PAHA). The span at 104–126 (PNAPGGPPGPQPAPSAAAPPPPA) shows a compositional bias: pro residues.

It belongs to the CITED family. As to quaternary structure, interacts via its C-terminal region with the CH1 domain of CREBBP and EP300. Interacts with all TFAP2/AP-2 isoforms. In terms of tissue distribution, expressed in most tissues examined with highest levels of expression in heart, liver, skeletal muscle and pancreas. Also expressed in bladder cell line ECV-304 and in various breast cancer cell lines. Also detected in both in situ and invasive breast tumors where its expression is down-regulated and mostly restricted to the cytoplasm of malignant epithelium. Down-regulation of expression is associated with elevated levels of HIF1A and increased tumor growth and angiogenesis.

It is found in the nucleus. The protein localises to the cytoplasm. Its function is as follows. Acts as a transcriptional coactivator for TFAP2/AP-2. Enhances estrogen-dependent transactivation mediated by estrogen receptors. May function as an inhibitor of transactivation by HIF1A by disrupting HIF1A interaction with CREBBP. May be involved in regulation of gene expression during development and differentiation of blood cells, endothelial cells and mammary epithelial cells. This is Cbp/p300-interacting transactivator 4 from Homo sapiens (Human).